Here is a 72-residue protein sequence, read N- to C-terminus: uncharacterized protein (72 aa).

The chain crosses the membrane as a helical span at residues 23–45; it reads ITNLLITTILLCFFNATTYWKLF.

It localises to the membrane. This is an uncharacterized protein from Schizosaccharomyces pombe (strain 972 / ATCC 24843) (Fission yeast).